A 143-amino-acid polypeptide reads, in one-letter code: uncharacterized protein (143 aa).

The HTH marR-type domain occupies 11–139 (EYELTTFIRR…FGELLQRMNK (129 aa)). A DNA-binding region (H-T-H motif) is located at residues 53–76 (VKELAESFKLDISTLSRQAAALEA).

This is an uncharacterized protein from Bacillus subtilis (strain 168).